A 319-amino-acid chain; its full sequence is MATH domain and coiled-coil domain-containing protein At3g58200 (319 aa).

The MATH domain occupies 6–132 (DNKFRWVIKN…NEEVKIVVEV (127 aa)). A coiled-coil region spans residues 255-302 (FKVDWLEKKLEEVKEKKKEEQIGETRMQEMKVFKQKCSDIEALMEREK).

The protein is MATH domain and coiled-coil domain-containing protein At3g58200 of Arabidopsis thaliana (Mouse-ear cress).